A 209-amino-acid polypeptide reads, in one-letter code: Ubiquitin-conjugating enzyme E2 S (209 aa).

Residues 14–160 (QTIRQVMREL…ARMMTEIHAQ (147 aa)) enclose the UBC core domain. The active-site Glycyl thioester intermediate is cysteine 98. Residues 162–209 (AKCGAGAHGDDKDDDGPSTKKHAGLDKKLQDKKKEKLLKEKKRMLKRL) form a disordered region. Positions 169-199 (HGDDKDDDGPSTKKHAGLDKKLQDKKKEKLL) are enriched in basic and acidic residues. The span at 200-209 (KEKKRMLKRL) shows a compositional bias: basic residues.

This sequence belongs to the ubiquitin-conjugating enzyme family.

The catalysed reaction is S-ubiquitinyl-[E1 ubiquitin-activating enzyme]-L-cysteine + [E2 ubiquitin-conjugating enzyme]-L-cysteine = [E1 ubiquitin-activating enzyme]-L-cysteine + S-ubiquitinyl-[E2 ubiquitin-conjugating enzyme]-L-cysteine.. It functions in the pathway protein modification; protein ubiquitination. Catalyzes the covalent attachment of ubiquitin to other proteins. Acts as an essential factor of the anaphase promoting complex/cyclosome (APC/C), a cell cycle-regulated ubiquitin ligase that controls progression through mitosis. Acts by specifically elongating polyubiquitin chains initiated by the E2 enzyme vih/UbcH10 on APC/C substrates, enhancing the degradation of APC/C substrates by the proteasome and promoting mitotic exit. The protein is Ubiquitin-conjugating enzyme E2 S of Drosophila erecta (Fruit fly).